The chain runs to 77 residues: Defensin-like protein 161 (77 aa).

Positions 1–27 are cleaved as a signal peptide; the sequence is MAKLSCSYLLVFMLVFSAILMVEKVEG. 4 disulfide bridges follow: Cys-30–Cys-77, Cys-40–Cys-59, Cys-45–Cys-71, and Cys-49–Cys-73.

Belongs to the DEFL family.

The protein localises to the secreted. In Arabidopsis thaliana (Mouse-ear cress), this protein is Defensin-like protein 161 (LCR27).